The primary structure comprises 625 residues: Glucose dehydrogenase [FAD, quinone] (625 aa).

The signal sequence occupies residues 1-42 (MATSPSSCDCLVGVPTGPTLASTCGGSAFMLFMGLLEVFIRS). Position 66–95 (66–95 (DFIVIGGGSAGSVVASRLSEVPQWKVLLIE)) interacts with FAD. The active-site Proton acceptor is the H544. U613 is a non-standard amino acid (selenocysteine).

This sequence belongs to the GMC oxidoreductase family. FAD serves as cofactor.

The protein resides in the secreted. It carries out the reaction a quinone + D-glucose = D-glucono-1,5-lactone + a quinol. This is Glucose dehydrogenase [FAD, quinone] (Gld) from Drosophila pseudoobscura pseudoobscura (Fruit fly).